We begin with the raw amino-acid sequence, 105 residues long: ATP-dependent Clp protease adapter protein ClpS (105 aa).

It belongs to the ClpS family. In terms of assembly, binds to the N-terminal domain of the chaperone ClpA.

Functionally, involved in the modulation of the specificity of the ClpAP-mediated ATP-dependent protein degradation. In Klebsiella pneumoniae (strain 342), this protein is ATP-dependent Clp protease adapter protein ClpS.